We begin with the raw amino-acid sequence, 186 residues long: Peptidyl-tRNA hydrolase (186 aa).

Residue Y14 coordinates tRNA. H19 functions as the Proton acceptor in the catalytic mechanism. Residues Y64, N66, and N112 each coordinate tRNA.

The protein belongs to the PTH family. In terms of assembly, monomer.

The protein localises to the cytoplasm. The enzyme catalyses an N-acyl-L-alpha-aminoacyl-tRNA + H2O = an N-acyl-L-amino acid + a tRNA + H(+). Its function is as follows. Hydrolyzes ribosome-free peptidyl-tRNAs (with 1 or more amino acids incorporated), which drop off the ribosome during protein synthesis, or as a result of ribosome stalling. Catalyzes the release of premature peptidyl moieties from peptidyl-tRNA molecules trapped in stalled 50S ribosomal subunits, and thus maintains levels of free tRNAs and 50S ribosomes. The protein is Peptidyl-tRNA hydrolase of Bacillus cereus (strain ATCC 10987 / NRS 248).